Reading from the N-terminus, the 219-residue chain is Small ribosomal subunit protein uS5 (219 aa).

Positions 52–115 (LDDEVLDINM…DVAKLNLISV (64 aa)) constitute an S5 DRBM domain. Positions 196–219 (LRNASQSRTPRRAAAKQREQEVSE) are disordered.

Belongs to the universal ribosomal protein uS5 family. In terms of assembly, part of the 30S ribosomal subunit. Contacts protein S4.

Its function is as follows. With S4 and S12 plays an important role in translational accuracy. The sequence is that of Small ribosomal subunit protein uS5 from Haloquadratum walsbyi (strain DSM 16790 / HBSQ001).